Reading from the N-terminus, the 400-residue chain is Nicotinate phosphoribosyltransferase (400 aa).

A Phosphohistidine; by autocatalysis modification is found at His220.

Belongs to the NAPRTase family. Post-translationally, transiently phosphorylated on a His residue during the reaction cycle. Phosphorylation strongly increases the affinity for substrates and increases the rate of nicotinate D-ribonucleotide production. Dephosphorylation regenerates the low-affinity form of the enzyme, leading to product release.

The catalysed reaction is nicotinate + 5-phospho-alpha-D-ribose 1-diphosphate + ATP + H2O = nicotinate beta-D-ribonucleotide + ADP + phosphate + diphosphate. Its pathway is cofactor biosynthesis; NAD(+) biosynthesis; nicotinate D-ribonucleotide from nicotinate: step 1/1. Functionally, catalyzes the synthesis of beta-nicotinate D-ribonucleotide from nicotinate and 5-phospho-D-ribose 1-phosphate at the expense of ATP. This Escherichia coli (strain K12 / MC4100 / BW2952) protein is Nicotinate phosphoribosyltransferase.